A 255-amino-acid polypeptide reads, in one-letter code: Diphthine synthase (255 aa).

Residues leucine 9, aspartate 85, valine 88, 113-114 (SI), leucine 164, alanine 207, and histidine 232 each bind S-adenosyl-L-methionine.

Belongs to the diphthine synthase family. In terms of assembly, homodimer.

The enzyme catalyses 2-[(3S)-amino-3-carboxypropyl]-L-histidyl-[translation elongation factor 2] + 3 S-adenosyl-L-methionine = diphthine-[translation elongation factor 2] + 3 S-adenosyl-L-homocysteine + 3 H(+). It functions in the pathway protein modification; peptidyl-diphthamide biosynthesis. S-adenosyl-L-methionine-dependent methyltransferase that catalyzes the trimethylation of the amino group of the modified target histidine residue in translation elongation factor 2 (EF-2), to form an intermediate called diphthine. The three successive methylation reactions represent the second step of diphthamide biosynthesis. The sequence is that of Diphthine synthase from Methanococcus maripaludis (strain C5 / ATCC BAA-1333).